A 293-amino-acid chain; its full sequence is Ribosomal protein L11 methyltransferase (293 aa).

Threonine 145, glycine 166, aspartate 188, and asparagine 229 together coordinate S-adenosyl-L-methionine.

The protein belongs to the methyltransferase superfamily. PrmA family.

The protein localises to the cytoplasm. The catalysed reaction is L-lysyl-[protein] + 3 S-adenosyl-L-methionine = N(6),N(6),N(6)-trimethyl-L-lysyl-[protein] + 3 S-adenosyl-L-homocysteine + 3 H(+). Its function is as follows. Methylates ribosomal protein L11. This Halorhodospira halophila (strain DSM 244 / SL1) (Ectothiorhodospira halophila (strain DSM 244 / SL1)) protein is Ribosomal protein L11 methyltransferase.